Reading from the N-terminus, the 387-residue chain is 3-ketoacyl-CoA thiolase (387 aa).

Cys-91 acts as the Acyl-thioester intermediate in catalysis. Active-site proton acceptor residues include His-343 and Cys-373.

The protein belongs to the thiolase-like superfamily. Thiolase family. In terms of assembly, heterotetramer of two alpha chains (FadB) and two beta chains (FadA).

It is found in the cytoplasm. It catalyses the reaction an acyl-CoA + acetyl-CoA = a 3-oxoacyl-CoA + CoA. The protein operates within lipid metabolism; fatty acid beta-oxidation. Catalyzes the final step of fatty acid oxidation in which acetyl-CoA is released and the CoA ester of a fatty acid two carbons shorter is formed. This chain is 3-ketoacyl-CoA thiolase, found in Salmonella choleraesuis (strain SC-B67).